Reading from the N-terminus, the 2497-residue chain is MEKVHVDIEEDSPFLRALQRSFPQFEVEAKQVTDNDHANARAFSHLASKLIETEVEPSDTILDIGSAPARRMYSKHKYHCICPMKCAEDPDRLFKYAAKLKKNCKDITDKELDKKMKELAEVMSDPDLETETICLHDDETCRFEGQVAVYQDVYAVDGPTSLYHQANKGVRVAYWIGFDTTPFMFKNLAGAYPSYSTNWADETVLTARNIGLCSSDVMERSRRGMSILRKKFLKPSNNVLFSVGSTIYHEKRDLLRSWHLPSVFHLRGKQNYTCRCETIVSCDGYVVKRIAISPGLYGKPSGYAATMHREGFLCCKVTDTLDGERVSFPVCTYVPATLCDQMTGILATDVSADDAQKLLVGLNQRIVVNGRTQRNTNTMKNYLLPVVAQAFARWAKEYKEDQEDERPLGLRDRQLVMGCCWAFRKHKITSVYKRPDTQTIIKVNSDFHSFVLPRIGSNTLEIGLRTRIRKLLEEPVDRPPLITADDIQEAKNAADEAKEVKEAEELRAALPPLSADVEEPALEADVDLMLQEAGAGSVETPRGLIKVTSYAGEDKIGSYAVLSPQAVLRSEKLTCIHPLAEQVIVITHSGRKGRYAVEPYHGKVVVPEGQAIPVQDFQALSESATIVYNEREFVNRYLHHIATHGGALNTDEEYYRVVKPSEHEGEYLYDIDKKQCVKKELVSGLGLTGELVDPPFHEFAYESLRTRPAAPYQVPTIGVYGVPGSGKSGIIKSAVTKKDLVVSAKKENCAEIIRDVKKMKGLDVNARTVDSVLLNGCKHPVETLYIDEAFACHAGTLRALIAIIRPKKAVLCGDPKQCGFFNMMCLKVHFNHEICTQVFHKSISRRCTKSVTSVVSTLFYDKRMRTTNPRDSKIEIDTTGSTKPKKDDLILTCFRGWVKQLQIDYKGNEIMTAAASQGLTRKGVYAVRYKVNENPLYAPTSEHVNVLLTRTEDKIVWKTLAGDPWIKTLTAKYPGDFTATMEEWQAEHDAIMRHILEKPDPTDVFQNKANVCWAKALVPVLKTAGIDLTTEQWNTVDYFKEDKAHSAEIVLNQLCVRFFGLDLDSGLFSAPTVPLSIRNNHWDNSPSPNMYGLNKEVVRQLSRRYPQLPRAVTTGRAYDMNTGTLRNYDPRINLVPVNRRLPHALVTQHADYPPSDFSAFVSKLKGRTVLVVGEKMSISGKTVDWLSETPDSTFRARLDLGIPSELPKYDIVFVNVRTQYRYHHYQQCEDHAIKLSMLTKKACLHLNPGGTCVSIGYGYADRASESIIGAVARQFKFSRVCKPKVSKEETEVLFVFIGFDRKTRTHNPYKLSSTLTNIYTGSRLHEAGCAPSYHVVRGDIATATEGVIVNAANSKGQPGSGVCGALYRKYPESFDLQPIEVGKARLVKGNSKHLIHAVGPNFNKVSEVEGDKQLAEAYESIARIINDNNYRSVAIPLLSTGIFAGNKDRLMQSLNHLLTALDTTDADVAIYCRDKKWEVTLKEVVARREAVEEICISEDSSVAEPDAELVRVHPKSSLAGRKGYSTSDGKTFSYLEGTKFHQAAKDMAEINAMWPAATEANEQVCLYILGESMSSIRSKCPVEESEASTPPSTLPCLCIHAMTPERVQRLKASRPEQITVCSSFPLPKYRITGVQKIQCSHPILFSPKVPEYIHPRKYLADAASANNEAAELTSVDVQPQLEESPENTEQLVEEEDSISVLSEAPHQVHQVEAEVHRFSASAQSSSWSIPRASDFDVESLSVLESLGANDTISMESSSNETALALRTIFRTPPIPRPRVQSTSTDVDSISALESCDSTSDARSVDSDETDVSIFDKRLEFMARPVPAPRTKFRTPPVPKPRARRPFHPLSSRSSSRSSLASNPPGVNRVITREEFEAFVAQQQXRFDAGAYIFSSDTGQGHLQQKSVRQTVLSEVVLERTELEISYAPRLDLNKEEILRKKLQLNPTQANRSRYQSRRVENMKAITTKRILQGLGHYLKSEGKVECYRTLHPVPLYSASVNRAFSSPKVAVEACNVVLKENFPTVASYCIIPEYDAYLDMVDGASCCLDTASFCPAKLRSFPKKHAYLEPTIRSAVPSAIQNTLQNVLAAATKRNCNVTQMRELPVLDSAAFNVECFKKYACNNEYWETYKKNPIRLTEENVVNYITKLKGPKAAALYAKTHNLDMLQDIPMDRFIMDLKRDVKVTPGTKHTEERPKVQVIQAADPLATAYLCGIHRELVRRLNAVLLPNIHTLFDMSAEDFDAIIAEHFQPGDWVLETDIASFDKSEDDAMALTALMILEDLGVDPELLTLIEAAFGEISSIHLPTKTKFRFGAMMKSGMFLTLFVNTVINMVIASRVLRERLTNSPCAAFIGDDNIVKGVKSDKLMADRCATWLNMEVKIIDAVVGEKAPYFCGGFILCDSVTGTACRVADPLKRLFKLGKPLAVDDEHDDDRRRALQEESARWNRVGIFSELCKAVESRYETVGTAVIIMAMTTLASSVESFSCLRGAPIALYG.

The Alphavirus-like MT domain occupies 28–259 (EAKQVTDNDH…EKRDLLRSWH (232 aa)). The segment at 244-263 (GSTIYHEKRDLLRSWHLPSV) is nsP1 membrane-binding. C419 carries the S-palmitoyl cysteine; by host lipid modification. The (+)RNA virus helicase ATP-binding domain maps to 690–841 (ELVDPPFHEF…HEICTQVFHK (152 aa)). Position 721 to 728 (721 to 728 (GVPGSGKS)) interacts with a ribonucleoside 5'-triphosphate. The (+)RNA virus helicase C-terminal domain occupies 842–990 (SISRRCTKSV…MEEWQAEHDA (149 aa)). A Peptidase C9 domain is found at 1003-1322 (DVFQNKANVC…STLTNIYTGS (320 aa)). The segment at 1004-1023 (VFQNKANVCWAKALVPVLKT) is nucleolus localization signal. The active-site For cysteine protease nsP2 activity is C1012. The Nuclear export signal signature appears at 1056–1065 (VRFFGLDLDS). The active-site For cysteine protease nsP2 activity is the H1081. The Nuclear localization signal motif lies at 1179–1183 (SGKTV). One can recognise a Macro domain in the interval 1328-1489 (GCAPSYHVVR…TLKEVVARRE (162 aa)). ADP-D-ribose-binding residues include D1339, N1353, G1361, G1441, I1442, and F1443. Positions 1596, 1598, 1621, and 1639 each coordinate Zn(2+). Disordered stretches follow at residues 1774–1806 (IPRP…SVDS) and 1827–1865 (APRT…NPPG). A binding to host FXR family members region spans residues 1856–1877 (RSSLASNPPGVNRVITREEFEA). The region spanning 2254–2369 (DWVLETDIAS…KGVKSDKLMA (116 aa)) is the RdRp catalytic domain.

Interacts with non-structural protein 3. Interacts with RNA-directed RNA polymerase nsP4. Interacts with protease nsP2. interacts with itself. In terms of assembly, interacts with mRNA-capping enzyme nsP1. Interacts with host DDX1. Interacts with host DDX3. Interacts (via C-terminus) with host FXR1; this interaction inhibits the formation of host stress granules on viral mRNAs and the nsp3-FXR1 complexes bind viral RNAs and probably orchestrate the assembly of viral replication complexes. Interacts (via C-terminus) with host FXR2; this interaction inhibits the formation of host stress granules on viral mRNAs and the nsp3-FXR2 complexes bind viral RNAs and probably orchestrate the assembly of viral replication complexes. Interacts (via C-terminus) with host FMR1; this interaction inhibits the formation of host stress granules on viral mRNAs and the nsp3-FMR1 complexes bind viral RNAs and probably orchestrate the assembly of viral replication complexes. As to quaternary structure, interacts with mRNA-capping enzyme nsP1. Interacts with protease nsP2. interacts with itself. Interacts with RNA-directed RNA polymerase nsP4. Interacts with mRNA-capping enzyme nsP1. Interacts with KPNA1/karyopherin-alpha1; this interaction probably allows the active transport of protease nsP2 into the host nucleus. It depends on Mg(2+) as a cofactor. The cofactor is Mn(2+). Specific enzymatic cleavages in vivo yield mature proteins. The processing of the polyprotein is temporally regulated. In early stages (1.7 hpi), P1234 is first cleaved in trans through its nsP2 protease activity, releasing P123' and nsP4, which associate to form the early replication complex. At the same time, P1234 is also cut at the nsP1/nsP2 site early in infection but with lower efficiency. After replication of the viral minus-strand RNAs (4 hpi), the polyproteins are cut at the nsP1/nsP2 and nsP2/nsP3 sites very efficiently, preventing accumulation of P123' and P1234 and allowing the formation of the late replication complex. NsP3'/nsP4 site is not cleaved anymore and P34 is produced rather than nsP4. In terms of processing, specific enzymatic cleavages in vivo yield mature proteins. The processing of the polyprotein is temporally regulated. In early stages (1.7 hpi), P123 is cleaved at the nsP1/nsP2 site with low efficiency. After replication of the viral minus-strand RNAs (4 hpi), the polyproteins are cut at the nsP1/nsP2 and nsP2/nsP3 sites very efficiently, preventing accumulation of P123 and allowing the formation of the late replication complex. Post-translationally, specific enzymatic cleavages in vivo yield mature proteins. The processing of the polyprotein is temporally regulated. In early stages (1.7 hpi), P123' is cleaved at the nsP1/nsP2 site with low efficiency. After replication of the viral minus-strand RNAs (4 hpi), the polyproteins are cut at the nsP1/nsP2 and nsP2/nsP3 sites very efficiently, preventing accumulation of P123' and allowing the formation of the late replication complex. Palmitoylated by host palmitoyltransferases ZDHHC2 and ZDHHC19. In terms of processing, phosphorylated by host on serines and threonines. Post-translationally, ubiquitinated; targets the protein for rapid degradation via the ubiquitin system. Nsp4 is present in extremely low quantities due to low frequency of translation through the amber stop-codon and the degradation by the ubiquitin pathway.

It is found in the host cytoplasmic vesicle membrane. It localises to the host cell membrane. Its subcellular location is the host cell projection. The protein localises to the host filopodium. The protein resides in the host nucleus. It is found in the host cytoplasm. It catalyses the reaction GTP + S-adenosyl-L-methionine = N(7)-methyl-GTP + S-adenosyl-L-homocysteine. It carries out the reaction N(7)-methyl-GTP + L-histidyl-[protein] = N(tele)-(N(7)-methylguanosine 5'-phospho)-L-histidyl-[protein] + diphosphate. The catalysed reaction is N(tele)-(N(7)-methylguanosine 5'-phospho)-L-histidyl-[protein] + a 5'-end diphospho-(purine-ribonucleoside) in mRNA + H(+) = a 5'-end (N(7)-methyl 5'-triphosphoguanosine)-(purine-ribonucleoside) in mRNA + L-histidyl-[protein]. The enzyme catalyses a 5'-end triphospho-ribonucleoside in mRNA + H2O = a 5'-end diphospho-ribonucleoside in mRNA + phosphate + H(+). It catalyses the reaction a ribonucleoside 5'-triphosphate + H2O = a ribonucleoside 5'-diphosphate + phosphate + H(+). It carries out the reaction ATP + H2O = ADP + phosphate + H(+). The catalysed reaction is RNA(n) + a ribonucleoside 5'-triphosphate = RNA(n+1) + diphosphate. The enzyme catalyses 4-O-(ADP-D-ribosyl)-L-aspartyl-[protein] + H2O = L-aspartyl-[protein] + ADP-D-ribose + H(+). It catalyses the reaction 5-O-(ADP-D-ribosyl)-L-glutamyl-[protein] + H2O = L-glutamyl-[protein] + ADP-D-ribose + H(+). It carries out the reaction RNA(n) + ATP = RNA(n)-3'-adenine ribonucleotide + diphosphate. The catalysed reaction is ADP-alpha-D-ribose 1''-phosphate + H2O = ADP-D-ribose + phosphate. Its activity is regulated as follows. Inhibited by sinefungin. Functionally, inactive precursor of the viral replicase, which is activated by cleavages carried out by the viral protease nsP2. The early replication complex formed by the polyprotein P123 and nsP4 synthesizes the minus-strand RNAs (antigenome). Polyprotein P123 is a short-lived polyprotein that accumulates during early stage of infection. As soon P123 is cleaved into mature proteins, the plus-strand RNAs synthesis begins. In terms of biological role, the early replication complex formed by the polyprotein P123' and nsP4 synthesizes minus-strand RNAs (antigenome). Polyprotein P123' is a short-lived polyprotein that accumulates during early stage of infection. As soon P123' is cleaved into mature proteins, the plus-strand RNAs synthesis begins. Its function is as follows. Cytoplasmic capping enzyme that catalyzes two virus-specific reactions: methyltransferase and nsP1 guanylyltransferase. mRNA-capping is necessary since all viral RNAs are synthesized in the cytoplasm, and host capping enzymes are restricted to the nucleus. The enzymatic reaction involves a covalent link between 7-methyl-GMP and nsP1, whereas eukaryotic capping enzymes form a covalent complex only with GMP. NsP1 capping consists in the following reactions: GTP is first methylated into 7-methyl-GMP and then is covalently linked to nsP1 to form the m7GMp-nsP1 complex from which 7-methyl-GMP complex is transferred to the mRNA to create the cap structure. NsP1 is also needed for the initiation of the minus-strand RNAs synthesis. Probably serves as a membrane anchor for the replication complex composed of nsP1-nsP4. Nsp1 is needed for the initiation of the minus-strand RNAs synthesis. Palmitoylated nsP1 is remodeling host cell cytoskeleton, and induces filopodium-like structure formation at the surface of the host cell. Functionally, multifunctional protein whose N-terminus is part of the RNA polymerase complex and displays NTPase, RNA triphosphatase and helicase activities. NTPase and RNA triphosphatase are involved in viral RNA capping and helicase keeps a check on the dsRNA replication intermediates. The C-terminus harbors a protease that specifically cleaves the polyproteins and releases the mature proteins. Required for the shutoff of minus-strand RNAs synthesis. Inhibits host translation to ensure maximal viral gene expression and evade host immune response. Seems to be essential for minus-strand RNAs and subgenomic 26S mRNAs synthesis. Displays mono-ADP-ribosylhydrolase activity. ADP-ribosylation is a post-translational modification that controls various processes of the host cell and the virus probably needs to revert it for optimal viral replication. Binds proteins of FXR family and sequesters them into the viral RNA replication complexes thereby inhibiting the formation of host stress granules on viral mRNAs. The nsp3-FXR complexes bind viral RNAs and probably orchestrate the assembly of viral replication complexes, thanks to the ability of FXR family members to self-assemble and bind DNA. In terms of biological role, seems to be essential for minus-strand RNAs and subgenomic 26S mRNAs synthesis. Displays mono-ADP-ribosylhydrolase activity. ADP-ribosylation is a post-translational modification that controls various processes of the host cell and the virus probably needs to revert it for optimal viral replication. Binds proteins of FXR family and sequesters them into the viral RNA replication complexes thereby inhibiting the formation of host stress granules on viral mRNAs. The nsp3'-FXR complexes bind viral RNAs and probably orchestrate the assembly of viral replication complexes, thanks to the ability of FXR family members to self-assemble and bind DNA. Its function is as follows. RNA dependent RNA polymerase. Replicates genomic and antigenomic RNA by recognizing replications specific signals. The early replication complex formed by the polyprotein P123 and nsP4 synthesizes minus-strand RNAs. The late replication complex composed of fully processed nsP1-nsP4 is responsible for the production of genomic and subgenomic plus-strand RNAs. This is Polyprotein P1234 from Venezuelan equine encephalitis virus (VEEV).